The following is a 129-amino-acid chain: Small ribosomal subunit protein uS11 (129 aa).

This sequence belongs to the universal ribosomal protein uS11 family. In terms of assembly, part of the 30S ribosomal subunit. Interacts with proteins S7 and S18. Binds to IF-3.

Functionally, located on the platform of the 30S subunit, it bridges several disparate RNA helices of the 16S rRNA. Forms part of the Shine-Dalgarno cleft in the 70S ribosome. The protein is Small ribosomal subunit protein uS11 of Sodalis glossinidius (strain morsitans).